The chain runs to 148 residues: Large ribosomal subunit protein bL9 (148 aa).

Belongs to the bacterial ribosomal protein bL9 family.

In terms of biological role, binds to the 23S rRNA. This chain is Large ribosomal subunit protein bL9, found in Oceanobacillus iheyensis (strain DSM 14371 / CIP 107618 / JCM 11309 / KCTC 3954 / HTE831).